Consider the following 440-residue polypeptide: Thymidine phosphorylase (440 aa).

The protein belongs to the thymidine/pyrimidine-nucleoside phosphorylase family. As to quaternary structure, homodimer.

The enzyme catalyses thymidine + phosphate = 2-deoxy-alpha-D-ribose 1-phosphate + thymine. The protein operates within pyrimidine metabolism; dTMP biosynthesis via salvage pathway; dTMP from thymine: step 1/2. Its function is as follows. The enzymes which catalyze the reversible phosphorolysis of pyrimidine nucleosides are involved in the degradation of these compounds and in their utilization as carbon and energy sources, or in the rescue of pyrimidine bases for nucleotide synthesis. The sequence is that of Thymidine phosphorylase from Erwinia tasmaniensis (strain DSM 17950 / CFBP 7177 / CIP 109463 / NCPPB 4357 / Et1/99).